Reading from the N-terminus, the 291-residue chain is Foldase protein PrsA 2 (291 aa).

An N-terminal signal peptide occupies residues 1–20 (MKKKLILGLVMMMALFSLAA). Cys21 is lipidated: N-palmitoyl cysteine. Cys21 carries S-diacylglycerol cysteine lipidation. Positions 135–226 (QPDITVSHIL…YGYHIIQMDK (92 aa)) constitute a PpiC domain.

Belongs to the PrsA family.

The protein resides in the cell membrane. It carries out the reaction [protein]-peptidylproline (omega=180) = [protein]-peptidylproline (omega=0). Its function is as follows. Plays a major role in protein secretion by helping the post-translocational extracellular folding of several secreted proteins. This Listeria innocua serovar 6a (strain ATCC BAA-680 / CLIP 11262) protein is Foldase protein PrsA 2 (prsA2).